The sequence spans 130 residues: Granulin (130 aa).

The N-terminal stretch at 1–26 (MNYSKIFIFGIISLILMALFSSTVES) is a signal peptide. Disulfide bonds link Cys67–Cys79 and Cys73–Cys89.

Belongs to the granulin family. Post-translationally, granulins are disulfide bridged.

The protein localises to the secreted. The protein is Granulin (grn) of Dictyostelium discoideum (Social amoeba).